We begin with the raw amino-acid sequence, 1039 residues long: Integrin alpha-IIb (1039 aa).

The first 31 residues, 1-31, serve as a signal peptide directing secretion; that stretch reads MARALCPLQALWLLEWVLLLLGPCAAPPAWA. At 32–993 the chain is on the extracellular side; the sequence is LNLDPVQLTF…TQLLRALEER (962 aa). FG-GAP repeat units lie at residues 35–96, 110–173, 187–238, 251–305, 306–371, 373–432, and 435–496; these read DPVQ…GGQC, VGSQ…RRAE, VEND…FSSY, SLSF…DSYY, QRLH…PHAL, APSL…GLRS, and SQVL…VQDS. N-linked (GlcNAc...) asparagine glycosylation is present at asparagine 46. 3 cysteine pairs are disulfide-bonded: cysteine 87/cysteine 96, cysteine 138/cysteine 161, and cysteine 177/cysteine 198. Ca(2+) is bound by residues glutamate 274, aspartate 276, and aspartate 278. The N-linked (GlcNAc...) asparagine glycan is linked to asparagine 280. 17 residues coordinate Ca(2+): threonine 281, glutamate 283, aspartate 328, asparagine 330, aspartate 332, arginine 334, aspartate 336, aspartate 396, aspartate 398, aspartate 400, tyrosine 402, aspartate 404, aspartate 457, aspartate 459, asparagine 461, tyrosine 463, and aspartate 465. 2 disulfides stabilise this stretch: cysteine 504–cysteine 515 and cysteine 521–cysteine 576. N-linked (GlcNAc...) asparagine glycosylation is present at asparagine 601. 4 disulfide bridges follow: cysteine 633-cysteine 639, cysteine 705-cysteine 718, cysteine 857-cysteine 921, and cysteine 911-cysteine 916. Asparagine 711 carries an N-linked (GlcNAc...) asparagine glycan. An O-linked (GalNAc...) serine; in variant S-874 glycan is attached at isoleucine 874. O-linked (GalNAc...) serine glycosylation occurs at serine 878. At glutamine 891 the chain carries Pyrrolidone carboxylic acid; in light chain form 1. Residue asparagine 962 is glycosylated (N-linked (GlcNAc...) asparagine). Residues 994–1019 traverse the membrane as a helical segment; the sequence is AIPIWWVLVGVLGGLLLLTILVLAMW. Residues 1020–1039 are Cytoplasmic-facing; sequence KVGFFKRNRPPLEEDDEEGE. The GFFKR motif signature appears at 1022–1026; the sequence is GFFKR.

This sequence belongs to the integrin alpha chain family. Heterodimer of an alpha and a beta subunit. The alpha subunit is composed of a heavy and a light chain linked by a disulfide bond. Alpha-IIb associates with beta-3. Directly interacts with RNF181. Interacts (via C-terminus cytoplasmic tail region) with CIB1; the interaction is direct and calcium-dependent. Interacts (via C-terminus cytoplasmic tail region) with CIB2, CIB3 and CIB4; the interactions are stabilized/increased in a calcium and magnesium-dependent manner. ITGA2B:ITGB3 interacts with PPIA/CYPA; the interaction is ROS and PPIase activity-dependent and is increased in the presence of thrombin. ITGA2B:ITGB3 interacts with SELP (via C-type lectin domain); the interaction mediates cell-cell interaction and adhesion. Cleaved by ELANE; the cleavage promotes activation of platelet fibrinogen receptor integrin alpha-IIb/beta-3. Isoform 1 and isoform 2 are expressed in platelets and megakaryocytes, but not in reticulocytes. Not detected in Jurkat, nor in U937 cell lines. Isoform 3 is expressed in prostate adenocarcinoma, as well as in several erythroleukemia, prostate adenocarcinoma and melanoma cell lines, including PC-3, DU-145, HEL, WM983A, WM983B and WM35. Not detected in platelets, nor in normal prostate (at protein level).

It is found in the membrane. In terms of biological role, integrin alpha-IIb/beta-3 is a receptor for fibronectin, fibrinogen, plasminogen, prothrombin, thrombospondin and vitronectin. It recognizes the sequence R-G-D in a wide array of ligands. It recognizes the sequence H-H-L-G-G-G-A-K-Q-A-G-D-V in fibrinogen gamma chain. Following activation integrin alpha-IIb/beta-3 brings about platelet/platelet interaction through binding of soluble fibrinogen. This step leads to rapid platelet aggregation which physically plugs ruptured endothelial cell surface. This chain is Integrin alpha-IIb (ITGA2B), found in Homo sapiens (Human).